The following is a 246-amino-acid chain: Flagellar brake protein YcgR (246 aa).

A PilZ domain is found at 128–232 (KRAHFRAYVG…QAERQLLQAI (105 aa)).

It belongs to the YcgR family. Monomer. Interacts with the flagellar basal bodies.

Its subcellular location is the bacterial flagellum basal body. Its function is as follows. Acts as a flagellar brake, regulating swimming and swarming in a bis-(3'-5') cyclic diguanylic acid (c-di-GMP)-dependent manner. Binds 1 c-di-GMP dimer per subunit. Increasing levels of c-di-GMP lead to decreased motility. The protein is Flagellar brake protein YcgR of Thioalkalivibrio sulfidiphilus (strain HL-EbGR7).